Reading from the N-terminus, the 294-residue chain is Phosphatidylserine decarboxylase proenzyme (294 aa).

Catalysis depends on charge relay system; for autoendoproteolytic cleavage activity residues Asp-113, His-169, and Ser-256. Catalysis depends on Ser-256, which acts as the Schiff-base intermediate with substrate; via pyruvic acid; for decarboxylase activity. Ser-256 is modified (pyruvic acid (Ser); by autocatalysis).

The protein belongs to the phosphatidylserine decarboxylase family. PSD-B subfamily. Prokaryotic type II sub-subfamily. In terms of assembly, heterodimer of a large membrane-associated beta subunit and a small pyruvoyl-containing alpha subunit. Pyruvate serves as cofactor. In terms of processing, is synthesized initially as an inactive proenzyme. Formation of the active enzyme involves a self-maturation process in which the active site pyruvoyl group is generated from an internal serine residue via an autocatalytic post-translational modification. Two non-identical subunits are generated from the proenzyme in this reaction, and the pyruvate is formed at the N-terminus of the alpha chain, which is derived from the carboxyl end of the proenzyme. The autoendoproteolytic cleavage occurs by a canonical serine protease mechanism, in which the side chain hydroxyl group of the serine supplies its oxygen atom to form the C-terminus of the beta chain, while the remainder of the serine residue undergoes an oxidative deamination to produce ammonia and the pyruvoyl prosthetic group on the alpha chain. During this reaction, the Ser that is part of the protease active site of the proenzyme becomes the pyruvoyl prosthetic group, which constitutes an essential element of the active site of the mature decarboxylase.

Its subcellular location is the cell membrane. The enzyme catalyses a 1,2-diacyl-sn-glycero-3-phospho-L-serine + H(+) = a 1,2-diacyl-sn-glycero-3-phosphoethanolamine + CO2. It functions in the pathway phospholipid metabolism; phosphatidylethanolamine biosynthesis; phosphatidylethanolamine from CDP-diacylglycerol: step 2/2. Its function is as follows. Catalyzes the formation of phosphatidylethanolamine (PtdEtn) from phosphatidylserine (PtdSer). The chain is Phosphatidylserine decarboxylase proenzyme from Clostridium perfringens (strain ATCC 13124 / DSM 756 / JCM 1290 / NCIMB 6125 / NCTC 8237 / Type A).